Here is a 418-residue protein sequence, read N- to C-terminus: UDP-N-acetylglucosamine 1-carboxyvinyltransferase (418 aa).

23–24 (KN) lines the phosphoenolpyruvate pocket. Residue Arg93 participates in UDP-N-acetyl-alpha-D-glucosamine binding. Residue Asp117 is the Proton donor of the active site. UDP-N-acetyl-alpha-D-glucosamine-binding residues include Asp305 and Val327.

It belongs to the EPSP synthase family. MurA subfamily.

The protein resides in the cytoplasm. The catalysed reaction is phosphoenolpyruvate + UDP-N-acetyl-alpha-D-glucosamine = UDP-N-acetyl-3-O-(1-carboxyvinyl)-alpha-D-glucosamine + phosphate. It participates in cell wall biogenesis; peptidoglycan biosynthesis. Functionally, cell wall formation. Adds enolpyruvyl to UDP-N-acetylglucosamine. The sequence is that of UDP-N-acetylglucosamine 1-carboxyvinyltransferase from Mycobacterium bovis (strain ATCC BAA-935 / AF2122/97).